We begin with the raw amino-acid sequence, 541 residues long: Light-independent protochlorophyllide reductase subunit B (541 aa).

D36 lines the [4Fe-4S] cluster pocket. D286 acts as the Proton donor in catalysis. 421 to 422 (GM) contributes to the substrate binding site.

Belongs to the ChlB/BchB/BchZ family. As to quaternary structure, protochlorophyllide reductase is composed of three subunits; BchL, BchN and BchB. Forms a heterotetramer of two BchB and two BchN subunits. It depends on [4Fe-4S] cluster as a cofactor.

The enzyme catalyses chlorophyllide a + oxidized 2[4Fe-4S]-[ferredoxin] + 2 ADP + 2 phosphate = protochlorophyllide a + reduced 2[4Fe-4S]-[ferredoxin] + 2 ATP + 2 H2O. The protein operates within porphyrin-containing compound metabolism; bacteriochlorophyll biosynthesis (light-independent). Functionally, component of the dark-operative protochlorophyllide reductase (DPOR) that uses Mg-ATP and reduced ferredoxin to reduce ring D of protochlorophyllide (Pchlide) to form chlorophyllide a (Chlide). This reaction is light-independent. The NB-protein (BchN-BchB) is the catalytic component of the complex. The protein is Light-independent protochlorophyllide reductase subunit B of Chloroflexus aurantiacus (strain ATCC 29364 / DSM 637 / Y-400-fl).